The sequence spans 152 residues: Deoxyuridine 5'-triphosphate nucleotidohydrolase (152 aa).

Substrate-binding positions include arginine 71–glycine 73, asparagine 84, leucine 88–aspartate 90, and methionine 98.

Belongs to the dUTPase family. Mg(2+) serves as cofactor.

The catalysed reaction is dUTP + H2O = dUMP + diphosphate + H(+). Its pathway is pyrimidine metabolism; dUMP biosynthesis; dUMP from dCTP (dUTP route): step 2/2. In terms of biological role, this enzyme is involved in nucleotide metabolism: it produces dUMP, the immediate precursor of thymidine nucleotides and it decreases the intracellular concentration of dUTP so that uracil cannot be incorporated into DNA. In Erwinia tasmaniensis (strain DSM 17950 / CFBP 7177 / CIP 109463 / NCPPB 4357 / Et1/99), this protein is Deoxyuridine 5'-triphosphate nucleotidohydrolase.